The sequence spans 59 residues: Large ribosomal subunit protein bL32 (59 aa).

The segment at 1–59 (MAVQQNKKSPSKRGMHRSHDHLSAAPLAVEPTTGETHLRHHVSPNGYYRGRKVIKTKND) is disordered. Basic residues-rich tracts occupy residues 9–19 (SPSKRGMHRSH) and 49–59 (RGRKVIKTKND).

This sequence belongs to the bacterial ribosomal protein bL32 family.

This Cupriavidus necator (strain ATCC 17699 / DSM 428 / KCTC 22496 / NCIMB 10442 / H16 / Stanier 337) (Ralstonia eutropha) protein is Large ribosomal subunit protein bL32.